Consider the following 416-residue polypeptide: UDP-N-acetylglucosamine 1-carboxyvinyltransferase (416 aa).

Residue Lys22 to Asn23 participates in phosphoenolpyruvate binding. Arg92 contributes to the UDP-N-acetyl-alpha-D-glucosamine binding site. Cys116 functions as the Proton donor in the catalytic mechanism. Cys116 carries the post-translational modification 2-(S-cysteinyl)pyruvic acid O-phosphothioketal. Residues Arg121 to Gln125, Asp304, and Ile326 contribute to the UDP-N-acetyl-alpha-D-glucosamine site.

It belongs to the EPSP synthase family. MurA subfamily.

It is found in the cytoplasm. It carries out the reaction phosphoenolpyruvate + UDP-N-acetyl-alpha-D-glucosamine = UDP-N-acetyl-3-O-(1-carboxyvinyl)-alpha-D-glucosamine + phosphate. It functions in the pathway cell wall biogenesis; peptidoglycan biosynthesis. Its function is as follows. Cell wall formation. Adds enolpyruvyl to UDP-N-acetylglucosamine. This is UDP-N-acetylglucosamine 1-carboxyvinyltransferase from Cupriavidus metallidurans (strain ATCC 43123 / DSM 2839 / NBRC 102507 / CH34) (Ralstonia metallidurans).